The sequence spans 833 residues: Leucine--tRNA ligase (833 aa).

Positions 41-52 match the 'HIGH' region motif; sequence PYPSGAGLHVGH. The 'KMSKS' region signature appears at 610–614; it reads KMSKS. Lys613 serves as a coordination point for ATP.

This sequence belongs to the class-I aminoacyl-tRNA synthetase family.

The protein resides in the cytoplasm. The enzyme catalyses tRNA(Leu) + L-leucine + ATP = L-leucyl-tRNA(Leu) + AMP + diphosphate. This is Leucine--tRNA ligase from Streptococcus pyogenes serotype M3 (strain ATCC BAA-595 / MGAS315).